Here is a 317-residue protein sequence, read N- to C-terminus: Ribose-phosphate pyrophosphokinase (317 aa).

Residues 43–45 (DGE) and 102–103 (RQ) contribute to the ATP site. ADP contacts are provided by Lys-106 and Arg-110. Residue His-136 coordinates Mg(2+). ADP is bound by residues Gln-141 and 149 to 150 (DH). Asp-175 is a binding site for Mg(2+). Lys-198 is a catalytic residue. D-ribose 5-phosphate-binding positions include Arg-200, Asp-224, and 228–232 (DTAGT). 311 to 313 (SVS) is an ADP binding site.

Belongs to the ribose-phosphate pyrophosphokinase family. Class I subfamily. In terms of assembly, homohexamer; trimer of dimers. Requires Mg(2+) as cofactor.

The protein localises to the cytoplasm. The catalysed reaction is D-ribose 5-phosphate + ATP = 5-phospho-alpha-D-ribose 1-diphosphate + AMP + H(+). It participates in metabolic intermediate biosynthesis; 5-phospho-alpha-D-ribose 1-diphosphate biosynthesis; 5-phospho-alpha-D-ribose 1-diphosphate from D-ribose 5-phosphate (route I): step 1/1. Activated by inorganic phosphate, and to a lesser extent by sulfate ions. In addition to form a complex with ATP, Mg(2+) also acts as a cofactor. Strongly inhibited by ADP through competitive binding at the activation site and at a specific allosteric site. Less strongly inhibited by alpha,beta-methylene ATP (mADP), AMP, GDP, GMP and UTP. Its function is as follows. Involved in the biosynthesis of the central metabolite phospho-alpha-D-ribosyl-1-pyrophosphate (PRPP) via the transfer of pyrophosphoryl group from ATP to 1-hydroxyl of ribose-5-phosphate (Rib-5-P). This Bacillus subtilis (strain 168) protein is Ribose-phosphate pyrophosphokinase.